The chain runs to 470 residues: Ribulose bisphosphate carboxylase large chain (470 aa).

Residues asparagine 115 and threonine 165 each coordinate substrate. Residue lysine 167 is the Proton acceptor of the active site. Position 169 (lysine 169) interacts with substrate. Mg(2+) contacts are provided by lysine 193, aspartate 195, and glutamate 196. Lysine 193 is modified (N6-carboxylysine). Catalysis depends on histidine 286, which acts as the Proton acceptor. 3 residues coordinate substrate: arginine 287, histidine 319, and serine 371.

This sequence belongs to the RuBisCO large chain family. Type I subfamily. In terms of assembly, heterohexadecamer of 8 large chains and 8 small chains. Mg(2+) serves as cofactor.

It is found in the carboxysome. It carries out the reaction 2 (2R)-3-phosphoglycerate + 2 H(+) = D-ribulose 1,5-bisphosphate + CO2 + H2O. The catalysed reaction is D-ribulose 1,5-bisphosphate + O2 = 2-phosphoglycolate + (2R)-3-phosphoglycerate + 2 H(+). RuBisCO catalyzes two reactions: the carboxylation of D-ribulose 1,5-bisphosphate, the primary event in carbon dioxide fixation, as well as the oxidative fragmentation of the pentose substrate in the photorespiration process. Both reactions occur simultaneously and in competition at the same active site. The protein is Ribulose bisphosphate carboxylase large chain of Prochlorococcus marinus (strain SARG / CCMP1375 / SS120).